The chain runs to 368 residues: MSDEQNKPESYSYAKAGVNIAAGNALVKAIGPLAKSTARPGADAELGGFGGFFDLKAAGYNDPLLVAGNDGVGTKVKLAIDHDRHDQIGIDLVAMCVNDLIVQGAEPLFFLDYFATGRLDNGVAERVVAGIADGCKLAGCALIGGETAEMPGMYADGDYDLAGFCVGAVERGEQLTGDRVAEGDVLLGLASSGVHSNGYSLVRRLAADKGWKLDRPALFDNERLLIDYLIEPTRIYVKSLLPFIRSGRINALAHITGGGLLENVPRVLPRGLHARIDADSWEQSRLMAFLQAQGNIEPEEMARTFNCGIGMILAVNPAQADALAADLAAAGETVYRVGTIVKGEKGCTVTGSAETWSARSAWEATHIG.

It belongs to the AIR synthase family.

The protein localises to the cytoplasm. The enzyme catalyses 2-formamido-N(1)-(5-O-phospho-beta-D-ribosyl)acetamidine + ATP = 5-amino-1-(5-phospho-beta-D-ribosyl)imidazole + ADP + phosphate + H(+). It participates in purine metabolism; IMP biosynthesis via de novo pathway; 5-amino-1-(5-phospho-D-ribosyl)imidazole from N(2)-formyl-N(1)-(5-phospho-D-ribosyl)glycinamide: step 2/2. This Novosphingobium aromaticivorans (strain ATCC 700278 / DSM 12444 / CCUG 56034 / CIP 105152 / NBRC 16084 / F199) protein is Phosphoribosylformylglycinamidine cyclo-ligase.